The primary structure comprises 81 residues: Photosystem I iron-sulfur center (81 aa).

2 consecutive 4Fe-4S ferredoxin-type domains span residues 2-31 and 39-68; these read SHSVKIYDTCIGCTQCVRACPTDVLEMVPW and IASAPRTEDCVGCKRCESACPTDFLSVRVY. [4Fe-4S] cluster contacts are provided by Cys-11, Cys-14, Cys-17, Cys-21, Cys-48, Cys-51, Cys-54, and Cys-58.

In terms of assembly, the eukaryotic PSI reaction center is composed of at least 11 subunits. [4Fe-4S] cluster serves as cofactor.

Its subcellular location is the plastid. It localises to the chloroplast thylakoid membrane. It catalyses the reaction reduced [plastocyanin] + hnu + oxidized [2Fe-2S]-[ferredoxin] = oxidized [plastocyanin] + reduced [2Fe-2S]-[ferredoxin]. Functionally, apoprotein for the two 4Fe-4S centers FA and FB of photosystem I (PSI); essential for photochemical activity. FB is the terminal electron acceptor of PSI, donating electrons to ferredoxin. The C-terminus interacts with PsaA/B/D and helps assemble the protein into the PSI complex. Required for binding of PsaD and PsaE to PSI. PSI is a plastocyanin/cytochrome c6-ferredoxin oxidoreductase, converting photonic excitation into a charge separation, which transfers an electron from the donor P700 chlorophyll pair to the spectroscopically characterized acceptors A0, A1, FX, FA and FB in turn. The sequence is that of Photosystem I iron-sulfur center from Pleurastrum terricola (Filamentous green alga).